The primary structure comprises 858 residues: Bifunctional uridylyltransferase/uridylyl-removing enzyme (858 aa).

Positions 1–324 (MSASVAAPPP…PATSGVTRVL (324 aa)) are uridylyltransferase. The segment at 325–681 (SPGRFVEKQG…ARPSPVGDAL (357 aa)) is uridylyl-removing. Positions 443–565 (VDQHILMVLR…VGNERRLTAL (123 aa)) constitute an HD domain. ACT domains follow at residues 682–761 (QVLV…PEPS) and 790–858 (ILSV…AIAV).

This sequence belongs to the GlnD family. Requires Mg(2+) as cofactor.

The enzyme catalyses [protein-PII]-L-tyrosine + UTP = [protein-PII]-uridylyl-L-tyrosine + diphosphate. It catalyses the reaction [protein-PII]-uridylyl-L-tyrosine + H2O = [protein-PII]-L-tyrosine + UMP + H(+). Its activity is regulated as follows. Uridylyltransferase (UTase) activity is inhibited by glutamine, while glutamine activates uridylyl-removing (UR) activity. Functionally, modifies, by uridylylation and deuridylylation, the PII regulatory proteins (GlnB and homologs), in response to the nitrogen status of the cell that GlnD senses through the glutamine level. Under low glutamine levels, catalyzes the conversion of the PII proteins and UTP to PII-UMP and PPi, while under higher glutamine levels, GlnD hydrolyzes PII-UMP to PII and UMP (deuridylylation). Thus, controls uridylylation state and activity of the PII proteins, and plays an important role in the regulation of nitrogen assimilation and metabolism. This chain is Bifunctional uridylyltransferase/uridylyl-removing enzyme, found in Burkholderia thailandensis (strain ATCC 700388 / DSM 13276 / CCUG 48851 / CIP 106301 / E264).